The following is a 97-amino-acid chain: Large ribosomal subunit protein uL23 (97 aa).

This sequence belongs to the universal ribosomal protein uL23 family. As to quaternary structure, part of the 50S ribosomal subunit. Contacts protein L29, and trigger factor when it is bound to the ribosome.

Its function is as follows. One of the early assembly proteins it binds 23S rRNA. One of the proteins that surrounds the polypeptide exit tunnel on the outside of the ribosome. Forms the main docking site for trigger factor binding to the ribosome. In Thermoanaerobacter pseudethanolicus (strain ATCC 33223 / 39E) (Clostridium thermohydrosulfuricum), this protein is Large ribosomal subunit protein uL23.